Here is a 201-residue protein sequence, read N- to C-terminus: 3-isopropylmalate dehydratase small subunit (201 aa).

Belongs to the LeuD family. LeuD type 1 subfamily. In terms of assembly, heterodimer of LeuC and LeuD.

It carries out the reaction (2R,3S)-3-isopropylmalate = (2S)-2-isopropylmalate. The protein operates within amino-acid biosynthesis; L-leucine biosynthesis; L-leucine from 3-methyl-2-oxobutanoate: step 2/4. Functionally, catalyzes the isomerization between 2-isopropylmalate and 3-isopropylmalate, via the formation of 2-isopropylmaleate. This is 3-isopropylmalate dehydratase small subunit from Escherichia coli O45:K1 (strain S88 / ExPEC).